Here is a 318-residue protein sequence, read N- to C-terminus: 2-dehydro-3-deoxygalactonokinase (318 aa).

Substrate-binding positions include 35 to 39 (GAESN), Y90, 105 to 107 (YDR), and R169. ATP-binding positions include 167 to 169 (NYR), 228 to 233 (TRGEDG), and 257 to 260 (GTGD). Substrate-binding residues include D260 and D296. D260 serves as the catalytic Proton acceptor.

It belongs to the carbohydrate kinase PfkB family. In terms of assembly, homohexamer.

The catalysed reaction is 2-dehydro-3-deoxy-D-galactonate + ATP = 2-dehydro-3-deoxy-6-phospho-D-galactonate + ADP + H(+). Its function is as follows. Involved in galactose catabolism. Catalyzes the phosphorylation of 2-keto-3-deoxygalactonate (KDGal) to produce 2-keto-3-deoxy-6-phosphogalactonate (KDPGal). Can also phosphorylate 2-keto-3-deoxygluconate (KDG) to 2-keto-3-deoxy-6-phosphogluconate (KDPG), but the catalytic efficiency for KDGal is 50-fold higher than for KDG. This is 2-dehydro-3-deoxygalactonokinase from Haloferax volcanii (strain ATCC 29605 / DSM 3757 / JCM 8879 / NBRC 14742 / NCIMB 2012 / VKM B-1768 / DS2) (Halobacterium volcanii).